The primary structure comprises 198 residues: MTDFTLNAQVRSDLGKGASRRLRHSLNIPAVVYGGDKEAQSLTIVAKEIAKLFENEAAFSHVIELNVDGAKQNVVVKAMQRHPAKGFIMHADFVRVVAGQKLTAVVPVHFINEEAPVKKGGEISHVESQIEVSCEAKDLPEFIEVDLGNAEIGTIIHLSDLKAPKGVEFVALAHGDDKAVANVHAPRVAPEAEEGAAE.

This sequence belongs to the bacterial ribosomal protein bL25 family. CTC subfamily. Part of the 50S ribosomal subunit; part of the 5S rRNA/L5/L18/L25 subcomplex. Contacts the 5S rRNA. Binds to the 5S rRNA independently of L5 and L18.

Its function is as follows. This is one of the proteins that binds to the 5S RNA in the ribosome where it forms part of the central protuberance. This is Large ribosomal subunit protein bL25 from Pseudomonas putida (strain W619).